A 105-amino-acid polypeptide reads, in one-letter code: Flagellar transcriptional regulator FlhD (105 aa).

It belongs to the FlhD family. In terms of assembly, homodimer; disulfide-linked. Forms a heterohexamer composed of two FlhC and four FlhD subunits. Each FlhC binds a FlhD dimer, forming a heterotrimer, and a hexamer assembles by dimerization of two heterotrimers.

It localises to the cytoplasm. In terms of biological role, functions in complex with FlhC as a master transcriptional regulator that regulates transcription of several flagellar and non-flagellar operons by binding to their promoter region. Activates expression of class 2 flagellar genes, including fliA, which is a flagellum-specific sigma factor that turns on the class 3 genes. Also regulates genes whose products function in a variety of physiological pathways. The polypeptide is Flagellar transcriptional regulator FlhD (Cupriavidus necator (strain ATCC 17699 / DSM 428 / KCTC 22496 / NCIMB 10442 / H16 / Stanier 337) (Ralstonia eutropha)).